The primary structure comprises 421 residues: Synaptotagmin-12 (421 aa).

At 1–18 the chain is on the vesicular side; it reads MAVDVTEYHLSVIKSPPG. The helical transmembrane segment at 19-39 threads the bilayer; the sequence is WEVGVYAAGALALLGIAAVSL. The Cytoplasmic segment spans residues 40–421; sequence WKLWTSGSFP…VSMWHPVRRN (382 aa). Ser97 is subject to Phosphoserine; by PKA. Phosphoserine occurs at positions 99 and 214. 2 consecutive C2 domains span residues 152-272 and 283-416; these read TLGQ…SGWL and AVGE…SMWH.

This sequence belongs to the synaptotagmin family. In terms of assembly, homodimer. Can also form heterodimers. Interacts with SYT1. Phosphorylation of Ser-97 is required for mossy-fiber long-term potentiation. As to expression, expressed in the brain, specifically in neurons of the cerebellum, cortex, hippocampus, olfactory bulb, brainstem and spinal cord (at protein level).

The protein localises to the cytoplasmic vesicle. The protein resides in the secretory vesicle. It is found in the synaptic vesicle membrane. Synaptic vesicle phosphoprotein that enhances spontaneous neurotransmitter release but does not effect induced neurotransmitter release. Unlike other synaptotagmins, it does not bind Ca(2+) or phospholipids. Essential for mossy-fiber long-term potentiation in the hippocampus. This is Synaptotagmin-12 from Rattus norvegicus (Rat).